An 80-amino-acid chain; its full sequence is Serine palmitoyltransferase small subunit B (80 aa).

Topologically, residues 1–11 are cytoplasmic; it reads MDVKHIKDYLS. Residues 12-29 traverse the membrane as a helical segment; that stretch reads WLYYQYLLITCSYVLEPW. The Lumenal portion of the chain corresponds to 30-36; that stretch reads EQSIFNT. Residues 37 to 57 form a helical membrane-spanning segment; that stretch reads LLLTIIAMVIYSSYIFIPIHV. Topologically, residues 58–80 are cytoplasmic; it reads RLAVEFFSRIFGGQHESTVALMS.

This sequence belongs to the SPTSS family. SPTSSB subfamily. As to quaternary structure, component of the serine palmitoyltransferase (SPT) complex, which is composed of SPTLC1, SPTLC2 or SPTLC3 and SPTSSA or SPTSSB. The heterodimer consisting of SPTLC1 and SPTLC2/SPTLC3 forms the catalytic core of the enzyme, while SPTSSA or SPTSSB subunits determine substrate specificity. SPT also interacts with ORMDL proteins, especially ORMDL3, which negatively regulate SPT activity in the presence of ceramides.

Its subcellular location is the endoplasmic reticulum membrane. The protein operates within lipid metabolism; sphingolipid metabolism. Its function is as follows. Component of the serine palmitoyltransferase multisubunit enzyme (SPT) that catalyzes the initial and rate-limiting step in sphingolipid biosynthesis by condensing L-serine and activated acyl-CoA (most commonly palmitoyl-CoA) to form long-chain bases. The SPT complex is composed of SPTLC1, SPTLC2 or SPTLC3 and SPTSSA or SPTSSB. Within this complex, the heterodimer consisting of SPTLC1 and SPTLC2/SPTLC3 forms the catalytic core. Within the SPT complex, SPTSSB stimulates the catalytic activity and plays a role in substrate specificity. SPT complexes with this subunit showing a preference for longer acyl-CoAs. The SPTLC1-SPTLC2-SPTSSB complex shows a strong preference for C18-CoA substrate, while the SPTLC1-SPTLC3-SPTSSB isozyme displays an ability to use a broader range of acyl-CoAs, without apparent preference. The chain is Serine palmitoyltransferase small subunit B (sptssb) from Xenopus laevis (African clawed frog).